Reading from the N-terminus, the 218-residue chain is MRIILLGAPGAGKGTQAKIIEQKYNIAHISTGDMIRETIKSGSVLGQELKKVLDAGELVSDEFIIKIVKDRISKNDCNNGFLLDGVPRTIPQAQELDKLGVNIDYIVEVDVADNLLIERITGRRIHPASGRTYHTKFNPPKVADKDDVTGEPLITRTDDNEDTVKQRLSVYHAQTAKLIDFYRNFSSTNTKIPKYIKINGDQAVEKVSQDIFDQLNKR.

10–15 is an ATP binding site; it reads GAGKGT. The segment at 30–59 is NMP; sequence STGDMIRETIKSGSVLGQELKKVLDAGELV. Residues Thr31, Arg36, 57–59, and Gln92 each bind AMP; that span reads ELV. The LID stretch occupies residues 122-159; that stretch reads GRRIHPASGRTYHTKFNPPKVADKDDVTGEPLITRTDD. Residues Arg123 and 132 to 133 each bind ATP; that span reads TY. AMP contacts are provided by Arg156 and Arg167. Gln202 lines the ATP pocket.

The protein belongs to the adenylate kinase family. As to quaternary structure, monomer.

It is found in the cytoplasm. The catalysed reaction is AMP + ATP = 2 ADP. It participates in purine metabolism; AMP biosynthesis via salvage pathway; AMP from ADP: step 1/1. Functionally, catalyzes the reversible transfer of the terminal phosphate group between ATP and AMP. Plays an important role in cellular energy homeostasis and in adenine nucleotide metabolism. The polypeptide is Adenylate kinase (Francisella tularensis subsp. holarctica (strain LVS)).